Consider the following 105-residue polypeptide: Large ribosomal subunit protein bL21 (105 aa).

It belongs to the bacterial ribosomal protein bL21 family. As to quaternary structure, part of the 50S ribosomal subunit. Contacts protein L20.

Functionally, this protein binds to 23S rRNA in the presence of protein L20. This Dictyoglomus turgidum (strain DSM 6724 / Z-1310) protein is Large ribosomal subunit protein bL21.